A 262-amino-acid polypeptide reads, in one-letter code: Phosphatidylglycerol--prolipoprotein diacylglyceryl transferase (262 aa).

4 consecutive transmembrane segments (helical) span residues 17 to 37 (FAIHWYGLMYLMAFVQFLLLG), 59 to 79 (LLFAGVLGVVLGGRLGYTLFY), 94 to 114 (IWEGGMSFHGGLLGVLAALYW), and 121 to 141 (TTFFVVSDLVAPLVPFGLAFG). Position 142 (arginine 142) interacts with a 1,2-diacyl-sn-glycero-3-phospho-(1'-sn-glycerol). Transmembrane regions (helical) follow at residues 176–196 (QIYQLLGEGVLLGIALWFYAG), 201–221 (VGQVSGFFLLGYGICRFLAEY), and 231–251 (LLGLGLSMGQWLCVPMIFFGI).

Belongs to the Lgt family.

The protein localises to the cell inner membrane. The enzyme catalyses L-cysteinyl-[prolipoprotein] + a 1,2-diacyl-sn-glycero-3-phospho-(1'-sn-glycerol) = an S-1,2-diacyl-sn-glyceryl-L-cysteinyl-[prolipoprotein] + sn-glycerol 1-phosphate + H(+). It functions in the pathway protein modification; lipoprotein biosynthesis (diacylglyceryl transfer). In terms of biological role, catalyzes the transfer of the diacylglyceryl group from phosphatidylglycerol to the sulfhydryl group of the N-terminal cysteine of a prolipoprotein, the first step in the formation of mature lipoproteins. The protein is Phosphatidylglycerol--prolipoprotein diacylglyceryl transferase of Polynucleobacter necessarius subsp. necessarius (strain STIR1).